Consider the following 418-residue polypeptide: Probable serine/threonine-protein kinase DDB_G0280461 (418 aa).

A Protein kinase domain is found at 14–271; sequence KIEENEFSKG…IVQTLDQLAI (258 aa). ATP-binding positions include 20–28 and K41; that span reads FSKGSFAKV. The active-site Proton acceptor is the D139. 2 disordered regions span residues 327–356 and 377–418; these read NNNNNNNNNNNNKNNINNNNNNNNNNNNNN and SVNS…CLIN. The span at 377-402 shows a compositional bias: low complexity; sequence SVNSSFSNSSLGSNGSNSSGTSTSSG. Residues 403–418 are compositionally biased toward basic residues; it reads GKKRSQKRKSWKCLIN.

The protein belongs to the protein kinase superfamily. TKL Ser/Thr protein kinase family.

The enzyme catalyses L-seryl-[protein] + ATP = O-phospho-L-seryl-[protein] + ADP + H(+). It carries out the reaction L-threonyl-[protein] + ATP = O-phospho-L-threonyl-[protein] + ADP + H(+). This Dictyostelium discoideum (Social amoeba) protein is Probable serine/threonine-protein kinase DDB_G0280461.